Reading from the N-terminus, the 160-residue chain is Epithelial membrane protein 1 (160 aa).

Residues 1 to 21 (MLVLLAGLFVVHIATAIMLFV) traverse the membrane as a helical segment. N43 is a glycosylation site (N-linked (GlcNAc...) asparagine). The next 3 membrane-spanning stretches (helical) occupy residues 67–87 (FMIL…FQLF), 95–115 (FFLS…GVSI), and 137–157 (FILT…YMVL).

The protein belongs to the PMP-22/EMP/MP20 family. Most prominently found in the gastrointestinal tract, skin, lung, and brain but not in liver.

Its subcellular location is the membrane. This Rattus norvegicus (Rat) protein is Epithelial membrane protein 1 (Emp1).